A 556-amino-acid chain; its full sequence is Pumilio homolog 11 (556 aa).

One can recognise a PUM-HD domain in the interval 215 to 556 (GGSRELDGSA…RIFSKNLWKK (342 aa)). Pumilio repeat units lie at residues 238–276 (SMVD…IIFK), 277–313 (EVIN…ILIR), 316–351 (SKPG…SLVK), 353–388 (ALVP…FILE), 389–424 (AATK…KLVD), 425–459 (EISR…VLFE), 460–495 (LRGN…VNEL), and 496–531 (VSVL…SLVE).

The protein resides in the cytoplasm. Functionally, sequence-specific RNA-binding protein that regulates translation and mRNA stability by binding the 3'-UTR of target mRNAs. The polypeptide is Pumilio homolog 11 (APUM11) (Arabidopsis thaliana (Mouse-ear cress)).